The following is a 370-amino-acid chain: Endopolygalacturonase A (370 aa).

Positions M1 to A19 are cleaved as a signal peptide. The propeptide occupies A20–R32. C35 and C50 form a disulfide bridge. 6 PbH1 repeats span residues S162–E192, S193–S214, G215–S235, V244–T265, V273–Q295, and S307–G352. A disulfide bond links C209 and C225. The active site involves H229. N246 carries N-linked (GlcNAc...) asparagine glycosylation. Cystine bridges form between C335/C340 and C359/C368.

Belongs to the glycosyl hydrolase 28 family.

It is found in the secreted. It catalyses the reaction (1,4-alpha-D-galacturonosyl)n+m + H2O = (1,4-alpha-D-galacturonosyl)n + (1,4-alpha-D-galacturonosyl)m.. Its function is as follows. Involved in maceration and soft-rotting of plant tissue. Hydrolyzes the 1,4-alpha glycosidic bonds of de-esterified pectate in the smooth region of the plant cell wall. This chain is Endopolygalacturonase A (pgaA), found in Aspergillus awamori (Black koji mold).